The following is a 242-amino-acid chain: Probable transcriptional regulatory protein Cthe_2075 (242 aa).

Belongs to the TACO1 family.

It is found in the cytoplasm. The polypeptide is Probable transcriptional regulatory protein Cthe_2075 (Acetivibrio thermocellus (strain ATCC 27405 / DSM 1237 / JCM 9322 / NBRC 103400 / NCIMB 10682 / NRRL B-4536 / VPI 7372) (Clostridium thermocellum)).